Reading from the N-terminus, the 808-residue chain is Zinc finger protein 148 (808 aa).

2 disordered regions span residues 15–86 (SPVG…ISQD) and 131–162 (DSLI…SPAK). Residues 56 to 73 (AEDDDDEDEEEDDDDDLA) are compositionally biased toward acidic residues. Residues 150 to 159 (HKKKKRKQRS) are compositionally biased toward basic residues. 4 consecutive C2H2-type zinc fingers follow at residues 180–202 (HICE…VFIH), 208–230 (FQCN…EKIH), 236–258 (FRCD…KRTH), and 264–287 (YQCD…RMCH). Disordered regions lie at residues 305–338 (RTPE…ASIT), 596–617 (SINS…QAPP), and 705–736 (SFSG…DPQS). 2 stretches are compositionally biased toward polar residues: residues 705–718 (SFSG…SVSP) and 725–736 (QVTSPKKTDPQS).

This sequence belongs to the krueppel C2H2-type zinc-finger protein family.

Its subcellular location is the nucleus. Involved in transcriptional regulation. Represses the transcription of a number of genes. Required for primitive and definitive hematopoiesis during embryonic development. The polypeptide is Zinc finger protein 148 (znf148) (Danio rerio (Zebrafish)).